The primary structure comprises 327 residues: uncharacterized protein (327 aa).

One can recognise an S4 RNA-binding domain in the interval 12 to 84 (MRIDRYLTQQ…IPITILYEDD (73 aa)). Asp137 is a catalytic residue.

This sequence belongs to the pseudouridine synthase RluA family.

It catalyses the reaction a uridine in RNA = a pseudouridine in RNA. This is an uncharacterized protein from Chlorobaculum parvum (strain DSM 263 / NCIMB 8327) (Chlorobium vibrioforme subsp. thiosulfatophilum).